The sequence spans 126 residues: Holo-[acyl-carrier-protein] synthase (126 aa).

Asp9 and Glu58 together coordinate Mg(2+).

The protein belongs to the P-Pant transferase superfamily. AcpS family. Mg(2+) is required as a cofactor.

The protein resides in the cytoplasm. It catalyses the reaction apo-[ACP] + CoA = holo-[ACP] + adenosine 3',5'-bisphosphate + H(+). Its function is as follows. Transfers the 4'-phosphopantetheine moiety from coenzyme A to a Ser of acyl-carrier-protein. The protein is Holo-[acyl-carrier-protein] synthase of Shewanella frigidimarina (strain NCIMB 400).